The sequence spans 255 residues: MDPIAFSIGGFQIRWYGIMIALGVLAALILANLNCRYKGYNFDSLIDVFLISFPLAIIGARVYYVVFQFQDYRNNLMDIFNIRLGGLAIHGGIIFGLGAAYIVSRYKKMDFIKLWDCFAPSIILGQAIGRWGNFFNGEAHGGIVGYEFISKFPLFIQRGMYINGDYYNPTFLYESLWDLIVCIILVYIFRKKHKRGTVICTYVGLYSLGRFFIEGLRTDSLMIGHIRVAQLVSFIGIVLSISFFVYLKGRGKRVD.

3 consecutive transmembrane segments (helical) span residues 15–35 (WYGI…NLNC), 46–66 (IDVF…YYVV), and 84–104 (LGGL…YIVS). Arg-130 is a binding site for a 1,2-diacyl-sn-glycero-3-phospho-(1'-sn-glycerol). 3 consecutive transmembrane segments (helical) span residues 169 to 189 (PTFL…VYIF), 196 to 216 (GTVI…IEGL), and 228 to 248 (VAQL…VYLK).

The protein belongs to the Lgt family.

It is found in the cell membrane. It catalyses the reaction L-cysteinyl-[prolipoprotein] + a 1,2-diacyl-sn-glycero-3-phospho-(1'-sn-glycerol) = an S-1,2-diacyl-sn-glyceryl-L-cysteinyl-[prolipoprotein] + sn-glycerol 1-phosphate + H(+). The protein operates within protein modification; lipoprotein biosynthesis (diacylglyceryl transfer). Catalyzes the transfer of the diacylglyceryl group from phosphatidylglycerol to the sulfhydryl group of the N-terminal cysteine of a prolipoprotein, the first step in the formation of mature lipoproteins. In Clostridium kluyveri (strain NBRC 12016), this protein is Phosphatidylglycerol--prolipoprotein diacylglyceryl transferase.